We begin with the raw amino-acid sequence, 270 residues long: Hemin import ATP-binding protein HmuV (270 aa).

The 238-residue stretch at 5 to 242 (LEAEAATYSV…SLINRVFDIE (238 aa)) folds into the ABC transporter domain. 37-44 (GPNGAGKS) contributes to the ATP binding site.

The protein belongs to the ABC transporter superfamily. Heme (hemin) importer (TC 3.A.1.14.5) family. As to quaternary structure, the complex is composed of two ATP-binding proteins (HmuV), two transmembrane proteins (HmuU) and a solute-binding protein (HmuT).

It is found in the cell inner membrane. Its function is as follows. Part of the ABC transporter complex HmuTUV involved in hemin import. Responsible for energy coupling to the transport system. The sequence is that of Hemin import ATP-binding protein HmuV from Rhodopseudomonas palustris (strain BisA53).